A 561-amino-acid chain; its full sequence is Mercuric reductase (561 aa).

Positions 1–65 (MTTLKITGMT…AVAGLGYEAT (65 aa)) constitute an HMA domain. Residues C11 and C14 each coordinate a metal cation. FAD is bound by residues A110, G130, and T135. Residues C136 and C141 are joined by a disulfide bond. K145, A211, D403, and V411 together coordinate FAD. The Hg(2+) site is built by C558 and C559.

The protein belongs to the class-I pyridine nucleotide-disulfide oxidoreductase family. As to quaternary structure, homodimer. Requires FAD as cofactor.

It carries out the reaction Hg + NADP(+) + H(+) = Hg(2+) + NADPH. Functionally, resistance to Hg(2+) in bacteria appears to be governed by a specialized system which includes mercuric reductase. MerA protein is responsible for volatilizing mercury as Hg(0). The polypeptide is Mercuric reductase (merA) (Acinetobacter calcoaceticus).